We begin with the raw amino-acid sequence, 647 residues long: MAATGVGAGCLAPSVRLRADPATAARASACVVRARLRRVARGRYVAELSREGPAARPAQQQQLAPPLVPGFLAPPPPAPAQSPAPTQPPLPDAGVGELAPDLLLEGIAEDSIDSIIVAASEQDSEIMDAKDQPQAKVTRSIVFVTGEAAPYAKSGGLGDVCGSLPIALAARGHRVMVVMPRYLNGSSDKNYAKALYTAKHIKIPCFGGSHEVTFFHEYRDNVDWVFVDHPSYHRPGSLYGDNFGAFGDNQFRYTLLCYAACEAPLILELGGYIYGQNCMFVVNDWHASLVPVLLAAKYRPYGVYRDSRSTLVIHNLAHQGVEPASTYPDLGLPPEWYGALEWVFPEWARRHALDKGEAVNFLKGAVVTADRIVTVSQGYSWEVTTAEGGQGLNELLSSRKSVLNGIVNGIDINDWNPTTDKCLPHHYSVDDLSGKAKCKAELQKELGLPVREDVPLIGFIGRLDYQKGIDLIKMAIPELMREDVQFVMLGSGDPIFEGWMRSTESSYKDKFRGWVGFSVPVSHRITAGCDILLMPSRFEPCGLNQLYAMQYGTVPVVHGTGGLRDTVETFNPFGAKGEEGTGWAFSPLTVDKMLWALRTAMSTFREHKPSWEGLMKRGMTKDHTWDHAAEQYEQIFEWAFVDQPYVM.

Residues 1 to 41 (MAATGVGAGCLAPSVRLRADPATAARASACVVRARLRRVAR) constitute a chloroplast transit peptide. The span at 66–91 (PLVPGFLAPPPPAPAQSPAPTQPPLP) shows a compositional bias: pro residues. The disordered stretch occupies residues 66 to 95 (PLVPGFLAPPPPAPAQSPAPTQPPLPDAGV). K153 is a binding site for ADP-alpha-D-glucose.

It belongs to the glycosyltransferase 1 family. Bacterial/plant glycogen synthase subfamily.

The protein localises to the plastid. It localises to the chloroplast. The protein resides in the amyloplast. It carries out the reaction [(1-&gt;4)-alpha-D-glucosyl](n) + ADP-alpha-D-glucose = [(1-&gt;4)-alpha-D-glucosyl](n+1) + ADP + H(+). Its pathway is glycan biosynthesis; starch biosynthesis. The sequence is that of Starch synthase 1, chloroplastic/amyloplastic (WSSI-2) from Triticum aestivum (Wheat).